The chain runs to 305 residues: tRNA dimethylallyltransferase (305 aa).

9-16 (GPTASGKT) is a binding site for ATP. A substrate-binding site is contributed by 11 to 16 (TASGKT). Interaction with substrate tRNA stretches follow at residues 34–37 (DSAL), 158–162 (QRLSR), and 239–244 (RCVGYR).

Belongs to the IPP transferase family. In terms of assembly, monomer. It depends on Mg(2+) as a cofactor.

It catalyses the reaction adenosine(37) in tRNA + dimethylallyl diphosphate = N(6)-dimethylallyladenosine(37) in tRNA + diphosphate. Functionally, catalyzes the transfer of a dimethylallyl group onto the adenine at position 37 in tRNAs that read codons beginning with uridine, leading to the formation of N6-(dimethylallyl)adenosine (i(6)A). This Aeromonas hydrophila subsp. hydrophila (strain ATCC 7966 / DSM 30187 / BCRC 13018 / CCUG 14551 / JCM 1027 / KCTC 2358 / NCIMB 9240 / NCTC 8049) protein is tRNA dimethylallyltransferase.